The following is a 60-amino-acid chain: Large ribosomal subunit protein bL33 (60 aa).

The protein belongs to the bacterial ribosomal protein bL33 family.

This chain is Large ribosomal subunit protein bL33, found in Chlorobium phaeobacteroides (strain DSM 266 / SMG 266 / 2430).